A 360-amino-acid polypeptide reads, in one-letter code: Peptide chain release factor 1 (360 aa).

Residue Q235 is modified to N5-methylglutamine. A compositionally biased stretch (basic and acidic residues) spans E281–R307. Residues E281–F311 are disordered.

It belongs to the prokaryotic/mitochondrial release factor family. Post-translationally, methylated by PrmC. Methylation increases the termination efficiency of RF1.

It is found in the cytoplasm. Functionally, peptide chain release factor 1 directs the termination of translation in response to the peptide chain termination codons UAG and UAA. The chain is Peptide chain release factor 1 from Rhizobium meliloti (strain 1021) (Ensifer meliloti).